The following is a 371-amino-acid chain: S-adenosylmethionine:tRNA ribosyltransferase-isomerase (371 aa).

Belongs to the QueA family. As to quaternary structure, monomer.

Its subcellular location is the cytoplasm. The catalysed reaction is 7-aminomethyl-7-carbaguanosine(34) in tRNA + S-adenosyl-L-methionine = epoxyqueuosine(34) in tRNA + adenine + L-methionine + 2 H(+). It participates in tRNA modification; tRNA-queuosine biosynthesis. Transfers and isomerizes the ribose moiety from AdoMet to the 7-aminomethyl group of 7-deazaguanine (preQ1-tRNA) to give epoxyqueuosine (oQ-tRNA). This is S-adenosylmethionine:tRNA ribosyltransferase-isomerase from Nitratidesulfovibrio vulgaris (strain DP4) (Desulfovibrio vulgaris).